Here is a 427-residue protein sequence, read N- to C-terminus: Glutamate-1-semialdehyde 2,1-aminomutase (427 aa).

At Lys-268 the chain carries N6-(pyridoxal phosphate)lysine.

Belongs to the class-III pyridoxal-phosphate-dependent aminotransferase family. HemL subfamily. Requires pyridoxal 5'-phosphate as cofactor.

The protein resides in the cytoplasm. The enzyme catalyses (S)-4-amino-5-oxopentanoate = 5-aminolevulinate. The protein operates within porphyrin-containing compound metabolism; protoporphyrin-IX biosynthesis; 5-aminolevulinate from L-glutamyl-tRNA(Glu): step 2/2. The sequence is that of Glutamate-1-semialdehyde 2,1-aminomutase from Methanococcus maripaludis (strain C7 / ATCC BAA-1331).